We begin with the raw amino-acid sequence, 317 residues long: Hairy/enhancer-of-split related with YRPW motif protein 1 (317 aa).

Residues 1 to 59 (MKRNHDFSSSDSELDENIEVEKESADENAGANSPLGSMSPSTTSQVQARKRRRGIIEKR) are disordered. Positions 30 to 47 (GANSPLGSMSPSTTSQVQ) are enriched in polar residues. The 56-residue stretch at 48–103 (ARKRRRGIIEKRRRDRINNSLSELRRLVPSAFEKQGSAKLEKAEILQMTVDHLKML) folds into the bHLH domain. The Orange domain maps to 121 to 157 (YRGLGFRECLAETARYLSIIEGLDNTDPLRIRLVSHL). 2 stretches are compositionally biased toward low complexity: residues 193–226 (QQQQ…SAPS) and 248–264 (PPST…TASK). The disordered stretch occupies residues 193–264 (QQQQQQGAPL…PGLTPPTASK (72 aa)). Residues 307–310 (YRPW) carry the YRPW motif motif.

This sequence belongs to the HEY family.

The protein localises to the nucleus. Transcriptional repressor which functions as a downstream effector of Notch signaling. The chain is Hairy/enhancer-of-split related with YRPW motif protein 1 (hey1) from Danio rerio (Zebrafish).